The primary structure comprises 118 residues: Probable mitochondrial pyruvate carrier 2 (118 aa).

Helical transmembrane passes span 19–35, 50–66, and 72–94; these read VHFWAPAMKWTLVLSGI, YAALCATGAIWTRWSLI, and YFNATVNFFLAIVGAVQVSRILV.

Belongs to the mitochondrial pyruvate carrier (MPC) (TC 2.A.105) family. In terms of assembly, the functional 150 kDa pyruvate import complex is a heteromer of mpc1 and mpc2.

Its subcellular location is the mitochondrion inner membrane. In terms of biological role, mediates the uptake of pyruvate into mitochondria. The sequence is that of Probable mitochondrial pyruvate carrier 2 from Schizosaccharomyces pombe (strain 972 / ATCC 24843) (Fission yeast).